The chain runs to 664 residues: Intraflagellar transport protein 70A2 (664 aa).

TPR repeat units follow at residues 11-44 (DGEFTAVVYRLIRDSRYSEAVQLLSAELQRSSRS), 45-78 (RAGLSLLAYCYYRLQEFELAAECYEQLSQMHPEL), 153-186 (PDGLVNMGCLLYKEGHYEAACSKFFAALQASGYQ), 188-220 (DVSYNLALACYSNRHYAPALKHIANIIERGIRQ), 395-423 (QVQEARHNRDDEVVIKAVNEYDETLEKYI), 424-456 (PVLMAQAKIYWNLENYPMVEKIFRKSVEFCNDH), and 458-491 (VWKLNVAHVLFMQENKYKEAIGFYEPIVKKNYDN). Residues 507 to 534 (YIMTSQNEEAEELMRKIEKEEEQLSYGD) adopt a coiled-coil conformation. A TPR 8 repeat occupies 543-576 (CIVNLVIGTLYCAKGNYDFGISRVIKSLEPYHKK).

The protein belongs to the TTC30/dfy-1/fleer family. As to quaternary structure, interacts wit the IFT B complex component IFT52.

The protein resides in the cell projection. It is found in the cilium. In terms of biological role, required for polyglutamylation of axonemal tubulin. Plays a role in anterograde intraflagellar transport (IFT), the process by which cilia precursors are transported from the base of the cilium to the site of their incorporation at the tip. This Mus musculus (Mouse) protein is Intraflagellar transport protein 70A2 (Ift70a2).